The following is a 126-amino-acid chain: Fluoride-specific ion channel FluC (126 aa).

4 consecutive transmembrane segments (helical) span residues 4–24 (SLLS…FVGL), 35–55 (LGTI…IALF), 67–87 (FVIT…AEVI), and 97–117 (FAIA…VLGL). The Na(+) site is built by Gly74 and Thr77.

It belongs to the fluoride channel Fluc/FEX (TC 1.A.43) family.

The protein localises to the cell inner membrane. The catalysed reaction is fluoride(in) = fluoride(out). Na(+) is not transported, but it plays an essential structural role and its presence is essential for fluoride channel function. Functionally, fluoride-specific ion channel. Important for reducing fluoride concentration in the cell, thus reducing its toxicity. The polypeptide is Fluoride-specific ion channel FluC (Acinetobacter baylyi (strain ATCC 33305 / BD413 / ADP1)).